The following is a 189-amino-acid chain: Probable nicotinate-nucleotide adenylyltransferase (189 aa).

It belongs to the NadD family.

It catalyses the reaction nicotinate beta-D-ribonucleotide + ATP + H(+) = deamido-NAD(+) + diphosphate. Its pathway is cofactor biosynthesis; NAD(+) biosynthesis; deamido-NAD(+) from nicotinate D-ribonucleotide: step 1/1. Functionally, catalyzes the reversible adenylation of nicotinate mononucleotide (NaMN) to nicotinic acid adenine dinucleotide (NaAD). This is Probable nicotinate-nucleotide adenylyltransferase from Staphylococcus aureus (strain bovine RF122 / ET3-1).